Here is a 427-residue protein sequence, read N- to C-terminus: Glutamate-1-semialdehyde 2,1-aminomutase (427 aa).

Lys265 carries the post-translational modification N6-(pyridoxal phosphate)lysine.

The protein belongs to the class-III pyridoxal-phosphate-dependent aminotransferase family. HemL subfamily. Homodimer. Pyridoxal 5'-phosphate is required as a cofactor.

The protein localises to the cytoplasm. It carries out the reaction (S)-4-amino-5-oxopentanoate = 5-aminolevulinate. The protein operates within porphyrin-containing compound metabolism; protoporphyrin-IX biosynthesis; 5-aminolevulinate from L-glutamyl-tRNA(Glu): step 2/2. This Edwardsiella ictaluri (strain 93-146) protein is Glutamate-1-semialdehyde 2,1-aminomutase.